We begin with the raw amino-acid sequence, 494 residues long: Caspase-8 (494 aa).

A propeptide spanning residues 1 to 242 is cleaved from the precursor; sequence MAGSNLLIHL…QEIESDNQQS (242 aa). Residues histidine 345 and cysteine 386 contribute to the active site. The propeptide occupies 401 to 410; it reads RIDVTTVSPD.

The protein belongs to the peptidase C14A family. Heterotetramer that consists of two anti-parallel arranged heterodimers, each one formed by a 15 kDa (caspase-8 subunit p15) and a 10 kDa (caspase-8 subunit p10) subunit. Interacts (via N-terminus) with Diap2; likely to bind Diap2 simultaneously with Fadd to form a trimeric complex. Interacts with Dark (via N-terminus). In terms of processing, polyubiquitinated by Diap2 following activation of the immune deficiency (Imd) pathway. In terms of tissue distribution, constitutively expressed in fat bodies of larvae and adults.

The protein localises to the cytoplasm. The enzyme catalyses Strict requirement for Asp at position P1 and has a preferred cleavage sequence of (Leu/Asp/Val)-Glu-Thr-Asp-|-(Gly/Ser/Ala).. Functionally, effector of the programmed cell death (PCD) activators rpr, grim and hid. May play an apoptotic role in the germline as well as soma. Fadd interacts with Dredd to promote cleavage of Dredd and is necessary and sufficient for enhancing Dredd-induced apoptosis. Plays a role in the innate immune response. Required for resistance to Gram-negative bacterial infection. Diap2-mediated ubiquitination of Dredd is critical for processing of imd and rel and the subsequent expression of antimicrobial genes such as DptA. This chain is Caspase-8, found in Drosophila melanogaster (Fruit fly).